Here is a 183-residue protein sequence, read N- to C-terminus: Ribosome-recycling factor (183 aa).

Belongs to the RRF family.

The protein localises to the cytoplasm. Its function is as follows. Responsible for the release of ribosomes from messenger RNA at the termination of protein biosynthesis. May increase the efficiency of translation by recycling ribosomes from one round of translation to another. The chain is Ribosome-recycling factor from Mycoplasma mobile (strain ATCC 43663 / 163K / NCTC 11711) (Mesomycoplasma mobile).